A 405-amino-acid chain; its full sequence is Probable tRNA sulfurtransferase (405 aa).

One can recognise a THUMP domain in the interval 60–165 (DQVMARLSQV…REAIYLSTKT (106 aa)). Residues 183–184 (ML), 208–209 (HF), Arg265, Gly287, and Gln296 contribute to the ATP site.

Belongs to the ThiI family.

It localises to the cytoplasm. The enzyme catalyses [ThiI sulfur-carrier protein]-S-sulfanyl-L-cysteine + a uridine in tRNA + 2 reduced [2Fe-2S]-[ferredoxin] + ATP + H(+) = [ThiI sulfur-carrier protein]-L-cysteine + a 4-thiouridine in tRNA + 2 oxidized [2Fe-2S]-[ferredoxin] + AMP + diphosphate. It catalyses the reaction [ThiS sulfur-carrier protein]-C-terminal Gly-Gly-AMP + S-sulfanyl-L-cysteinyl-[cysteine desulfurase] + AH2 = [ThiS sulfur-carrier protein]-C-terminal-Gly-aminoethanethioate + L-cysteinyl-[cysteine desulfurase] + A + AMP + 2 H(+). The protein operates within cofactor biosynthesis; thiamine diphosphate biosynthesis. In terms of biological role, catalyzes the ATP-dependent transfer of a sulfur to tRNA to produce 4-thiouridine in position 8 of tRNAs, which functions as a near-UV photosensor. Also catalyzes the transfer of sulfur to the sulfur carrier protein ThiS, forming ThiS-thiocarboxylate. This is a step in the synthesis of thiazole, in the thiamine biosynthesis pathway. The sulfur is donated as persulfide by IscS. The protein is Probable tRNA sulfurtransferase of Lacticaseibacillus casei (strain BL23) (Lactobacillus casei).